Consider the following 126-residue polypeptide: Holo-[acyl-carrier-protein] synthase (126 aa).

Mg(2+)-binding residues include Asp-8 and Glu-57.

This sequence belongs to the P-Pant transferase superfamily. AcpS family. Mg(2+) serves as cofactor.

It is found in the cytoplasm. The catalysed reaction is apo-[ACP] + CoA = holo-[ACP] + adenosine 3',5'-bisphosphate + H(+). Functionally, transfers the 4'-phosphopantetheine moiety from coenzyme A to a Ser of acyl-carrier-protein. This is Holo-[acyl-carrier-protein] synthase from Vibrio cholerae serotype O1 (strain ATCC 39315 / El Tor Inaba N16961).